A 146-amino-acid chain; its full sequence is VHWTAEEKQLITGLWGKVNVADCGAEALARLLIVYPWTQRFFASFGNLSSPTAILGNPMVRAHGKKVLTSFGDAVKNLDNIKNTFAQLSELHCDKLHVDPENFRLLGDILIIVLAAHFPKEFTPECQAAWQKLVRVVAHALARKYH.

The 145-residue stretch at H2–H146 folds into the Globin domain. The heme b site is built by H63 and H92.

The protein belongs to the globin family. Heterotetramer of two alpha chains and two beta chains. In terms of tissue distribution, red blood cells.

Its function is as follows. Involved in oxygen transport from the lung to the various peripheral tissues. This Anas platyrhynchos platyrhynchos (Northern mallard) protein is Hemoglobin subunit beta (HBB).